The primary structure comprises 522 residues: Circadian clock oscillator protein KaiC (522 aa).

2 consecutive KaiC domains span residues 1 to 248 and 262 to 522; these read MKKS…INIF and ARVS…DDLL. 20 residues coordinate ATP: Gly-50, Thr-51, Gly-52, Lys-53, Thr-54, Ser-90, Lys-225, Leu-226, Arg-227, Thr-229, His-231, Thr-241, Asp-242, Thr-291, Gly-292, Thr-293, Gly-294, Lys-295, Thr-296, and Leu-297. Thr-54 is a Mg(2+) binding site. Mg(2+) is bound at residue Thr-296. Glu-319 serves as a coordination point for Mg(2+). Trp-332 lines the ATP pocket. The residue at position 432 (Ser-432) is a Phosphoserine; by autocatalysis. At Thr-433 the chain carries Phosphothreonine; by autocatalysis. Residues Arg-452, Lys-458, Met-459, Arg-460, Ser-462, His-464, and Lys-466 each contribute to the ATP site.

This sequence belongs to the KaiC family. In terms of assembly, homohexamer; hexamerization is dependent on ATP-binding. The KaiABC complex composition changes during the circadian cycle to control KaiC phosphorylation. Complexes KaiC(6), KaiA(2-4):KaiC(6), KaiB(6):KaiC(6) and KaiC(6):KaiB(6):KaiA(12) are among the most important forms, many form cooperatively. KaiC interacts with SasA, activating its autokinase function and leading to RpaA activation. Requires Mg(2+) as cofactor. In terms of processing, phosphorylated on serine and threonine residues by autocatalysis. Has a 4 step phosphorylation cycle; the autokinase acts first on Thr-433, then Ser-432. When Ser-432 is modified KaiC switches to an autophosphatase mode, acting first on phospho-Thr-433 then phospho-Ser-432.

The catalysed reaction is L-seryl-[protein] + ATP = O-phospho-L-seryl-[protein] + ADP + H(+). It catalyses the reaction L-threonyl-[protein] + ATP = O-phospho-L-threonyl-[protein] + ADP + H(+). The enzyme catalyses ATP + H2O = ADP + phosphate + H(+). Its activity is regulated as follows. The interaction with KaiA enhances its phosphorylation status, while the interaction with KaiB decreases it. Functionally, central component of the KaiABC oscillator complex, which constitutes the main circadian regulator in cyanobacteria. Complex composition changes during the circadian cycle to control KaiC phosphorylation. KaiA stimulates KaiC autophosphorylation, while KaiB sequesters KaiA, leading to KaiC autodephosphorylation. Clock output pathways impact the RpaA transcriptional regulator. KaiC enhances the autophosphorylation activity of SasA, which then transfers its phosphate group to RpaA to activate it. KaiB and KaiC together enhance the phospho-RpaA dephosphatase activity of CikA. Its function is as follows. Has a weak, temperature-independent ATPase activity; ATPase activity defines the circadian period. The phosphorylation state of KaiC modulates its ATPase activity and effects KaiB binding. This Acaryochloris marina (strain MBIC 11017) protein is Circadian clock oscillator protein KaiC.